Here is a 223-residue protein sequence, read N- to C-terminus: Ethylene-inducing xylanase (223 aa).

The N-terminal stretch at 1-19 is a signal peptide; the sequence is MVSFTTLLAGFVAVTGVLS. The GH11 domain occupies 34–223; that stretch reads QTIGPGTGFN…SSGNANINVS (190 aa). N94 carries N-linked (GlcNAc...) asparagine glycosylation. E119 acts as the Nucleophile in catalysis. E210 functions as the Proton donor in the catalytic mechanism.

This sequence belongs to the glycosyl hydrolase 11 (cellulase G) family. Interactc with tomato LeEix2 receptor to trigger its internalization.

Its subcellular location is the secreted. The enzyme catalyses Endohydrolysis of (1-&gt;4)-beta-D-xylosidic linkages in xylans.. Its pathway is glycan degradation; xylan degradation. In terms of biological role, endo-1,4-beta-xylanase involved in the hydrolysis of xylan, a major structural heterogeneous polysaccharide found in plant biomass representing the second most abundant polysaccharide in the biosphere, after cellulose. Acts as an elicitor of plant defense responses in hosts such as tobacco (Nicotiana tabacum) or tomato (Solanum lycopersicum). Induces the production of ethylene and leads alterations in membrane function with rapid efflux of potassium, uptake of calcium, alkalization of the medium, increased leakage of cellular components and necrosis in plant hosts. EIX is translocated through the xylem of the host plant to the leaf mesophyll, leading to host response to pathogen-derived extracellular proteins in tissues distant from the invading pathogen. Greatly enhances the expression of two calcineurin B-like proteins-interacting protein kinases (CIPKs) family members, OsCIPK14 and OsCIPK15, in rice cultured cells. In tomato, triggers the defense response via binding to and subsequent internalization of the LeEix2 receptor. The polypeptide is Ethylene-inducing xylanase (Hypocrea rufa (Trichoderma viride)).